The primary structure comprises 366 residues: Chorismate synthase (366 aa).

Arg47 contacts NADP(+). Residues 124 to 126 (RSS), Gly286, 301 to 305 (KPVAT), and Arg327 contribute to the FMN site.

Belongs to the chorismate synthase family. As to quaternary structure, homotetramer. The cofactor is FMNH2.

It carries out the reaction 5-O-(1-carboxyvinyl)-3-phosphoshikimate = chorismate + phosphate. Its pathway is metabolic intermediate biosynthesis; chorismate biosynthesis; chorismate from D-erythrose 4-phosphate and phosphoenolpyruvate: step 7/7. Catalyzes the anti-1,4-elimination of the C-3 phosphate and the C-6 proR hydrogen from 5-enolpyruvylshikimate-3-phosphate (EPSP) to yield chorismate, which is the branch point compound that serves as the starting substrate for the three terminal pathways of aromatic amino acid biosynthesis. This reaction introduces a second double bond into the aromatic ring system. The polypeptide is Chorismate synthase (Methylacidiphilum infernorum (isolate V4) (Methylokorus infernorum (strain V4))).